Reading from the N-terminus, the 658-residue chain is Ubiquilin-3 (658 aa).

The 75-residue stretch at 22–96 (IRVTVKTPKD…VHLVIKMQRR (75 aa)) folds into the Ubiquitin-like domain. Residues 194 to 233 (NPHMQHLIQQNPEIGHILNNPEIMRQTMEFLRNPSMMQEM) form the STI1 domain. Low complexity predominate over residues 280–291 (TATTASTTTTSS). Disordered regions lie at residues 280 to 336 (TATT…RNRL) and 362 to 478 (YLQG…PESP). A compositionally biased stretch (gly residues) spans 312–323 (VSGGRQGRGGRQ). Polar residues-rich tracts occupy residues 362–379 (YLQGTVPTSNPSQESPLS), 389–400 (SSPKSGSGQSLP), and 438–469 (TGPSTSLPNLTSQIGDSANRSSFVSTPSSLMS). The 45-residue stretch at 614-658 (QLEAHFRVQLEQLRAMGFLNLEANLQALIATEGDVDAAVEKLRKS) folds into the UBA domain.

Testis-specific (at protein level).

The sequence is that of Ubiquilin-3 (Ubqln3) from Mus musculus (Mouse).